The primary structure comprises 281 residues: 32 kDa heat shock protein (281 aa).

Positions 142 to 168 (EDDEEIDSDEEFGDSDQDEEDSDDEEI) are enriched in acidic residues. Positions 142-281 (EDDEEIDSDE…NENNKKKQKN (140 aa)) are disordered. Basic and acidic residues predominate over residues 180 to 209 (KITEISEVPESKKEKTPEPKKVPEPKKEQV). Residues 210–273 (KQPTQPQQKK…NNKRPQNQNE (64 aa)) show a composition bias toward low complexity.

The sequence is that of 32 kDa heat shock protein (hspC) from Dictyostelium discoideum (Social amoeba).